The sequence spans 190 residues: Tereporin-Ca1 (190 aa).

The tract at residues 2-21 is N-terminal region; it reads TAGSSLAGTTLSGLAASGYR. Phosphocholine-binding residues include glycine 78, serine 96, proline 98, tyrosine 131, and tyrosine 132. The short motif at 138-140 is the Cell attachment site, crucial for protein stability element; the sequence is KGE.

The protein belongs to the actinoporin family. Conoidea subfamily. Octamer or nonamer in membranes. Monomer in the soluble state. Expressed by the venom duct.

It localises to the secreted. Its subcellular location is the nematocyst. It is found in the target cell membrane. In terms of biological role, pore-forming protein that forms pores of around 1 nm and causes cardiac stimulation and cytolysis. In Terebra anilis (Auger snail), this protein is Tereporin-Ca1.